Reading from the N-terminus, the 476-residue chain is Serine/threonine-protein kinase Chk1 (476 aa).

The segment at 1 to 265 is interaction with CLSPN; sequence MAVPFVEDWD…IPDIKKDRWY (265 aa). In terms of domain architecture, Protein kinase spans 9–265; it reads WDLVQTLGEG…IPDIKKDRWY (257 aa). Residues 15–23 and lysine 38 contribute to the ATP site; that span reads LGEGAYGEV. The active-site Proton acceptor is the aspartate 130. Residue lysine 132 forms a Glycyl lysine isopeptide (Lys-Gly) (interchain with G-Cter in ubiquitin) linkage. The segment at 267 to 331 is disordered; the sequence is KPLNRGAKRP…RTGLSLWDTG (65 aa). Serine 280 is modified (phosphoserine; by PKB/AKT1). Residues 280–291 are compositionally biased toward low complexity; it reads SGGMSESSSGFS. A phosphoserine mark is found at serine 286, serine 296, and serine 301. A compositionally biased stretch (polar residues) spans 298–320; sequence LDFSPVNNGSSEETVKFSSSQPE. A Phosphoserine; by ATM and ATR modification is found at serine 317. Serine 345 bears the Phosphoserine; by ATR mark. The autoinhibitory region stretch occupies residues 391–476; the sequence is QCLKETFEKL…SSQKVWFPVT (86 aa). Lysine 436 is covalently cross-linked (Glycyl lysine isopeptide (Lys-Gly) (interchain with G-Cter in ubiquitin)). Phosphoserine is present on residues serine 463, serine 467, and serine 468.

It belongs to the protein kinase superfamily. CAMK Ser/Thr protein kinase family. NIM1 subfamily. As to quaternary structure, interacts (phosphorylated by ATR) with RAD51. Interacts with and phosphorylates CLSPN, an adapter protein that regulates the ATR-dependent phosphorylation of CHEK1. Interacts with BRCA1. Interacts with and phosphorylates CDC25A, CDC25B and CDC25C. Interacts with FBXO6, which regulates CHEK1. Interacts with PPM1D, which regulates CHEK1 through dephosphorylation. Interacts with TIMELESS; DNA damage-dependent. Interacts with FEM1B; activates CHEK1 in response to stress. Interacts with TLK1. Interacts with XPO1 and YWHAZ. Interacts with CDK5RAP3; antagonizes CHEK1. Phosphorylated by ATR in a RAD17-dependent manner in response to ultraviolet irradiation and inhibition of DNA replication. Phosphorylated by ATM in response to ionizing irradiation. ATM and ATR can both phosphorylate Ser-317 and Ser-345 and this results in enhanced kinase activity. Phosphorylation at Ser-345 induces a change in the conformation of the protein, activates the kinase activity and is a prerequisite for interaction with FBXO6 and subsequent ubiquitination at Lys-436. Phosphorylation at Ser-345 also increases binding to 14-3-3 proteins and promotes nuclear retention. Conversely, dephosphorylation at Ser-345 by PPM1D may contribute to exit from checkpoint mediated cell cycle arrest. Phosphorylation at Ser-280 by AKT1/PKB, may promote mono and/or diubiquitination. Also phosphorylated at undefined residues during mitotic arrest, resulting in decreased activity. Post-translationally, ubiquitinated. Mono or diubiquitination promotes nuclear exclusion. The activated form (phosphorylated on Ser-345) is polyubiquitinated at Lys-436 by some SCF-type E3 ubiquitin ligase complex containing FBXO6 promoting its degradation. Ubiquitination and degradation are required to terminate the checkpoint and ensure that activated CHEK1 does not accumulate as cells progress through S phase, when replication forks encounter transient impediments during normal DNA replication. 'Lys-63'-mediated ubiquitination by TRAF4 at Lys-132 activates cell cycle arrest and activation of DNA repair. In terms of processing, proteolytically cleaved at the C-terminus by SPRTN during normal DNA replication, thereby promoting CHEK1 removal from chromatin and activating the protein kinase activity. Found in all adult tissues tested. Elevated expression in testis, lung and spleen. 15.5 day old embryos show ubiquitous expression with strong expression in brain, liver, kidney, pancreas, intestine, thymus and lung.

It localises to the nucleus. Its subcellular location is the chromosome. It is found in the cytoplasm. The protein resides in the cytoskeleton. The protein localises to the microtubule organizing center. It localises to the centrosome. The catalysed reaction is L-seryl-[protein] + ATP = O-phospho-L-seryl-[protein] + ADP + H(+). It catalyses the reaction L-threonyl-[protein] + ATP = O-phospho-L-threonyl-[protein] + ADP + H(+). Its activity is regulated as follows. Activated through phosphorylation predominantly by ATR but also by ATM in response to DNA damage or inhibition of DNA replication. Activation is modulated by several mediators including CLSPN, BRCA1 and FEM1B. Proteolytic cleavage at the C-terminus by SPRTN during normal DNA replication activates the protein kinase activity. Its function is as follows. Serine/threonine-protein kinase which is required for checkpoint-mediated cell cycle arrest and activation of DNA repair in response to the presence of DNA damage or unreplicated DNA. May also negatively regulate cell cycle progression during unperturbed cell cycles. This regulation is achieved by a number of mechanisms that together help to preserve the integrity of the genome. Recognizes the substrate consensus sequence [R-X-X-S/T]. Binds to and phosphorylates CDC25A, CDC25B and CDC25C. Phosphorylation of CDC25A at 'Ser-178' and 'Thr-507' and phosphorylation of CDC25C at 'Ser-216' creates binding sites for 14-3-3 proteins which inhibit CDC25A and CDC25C. Phosphorylation of CDC25A at 'Ser-76', 'Ser-124', 'Ser-178', 'Ser-279' and 'Ser-293' promotes proteolysis of CDC25A. Phosphorylation of CDC25A at 'Ser-76' primes the protein for subsequent phosphorylation at 'Ser-79', 'Ser-82' and 'Ser-88' by NEK11, which is required for polyubiquitination and degradation of CDCD25A. Inhibition of CDC25 leads to increased inhibitory tyrosine phosphorylation of CDK-cyclin complexes and blocks cell cycle progression. Also phosphorylates NEK6. Binds to and phosphorylates RAD51 at 'Thr-309', which promotes the release of RAD51 from BRCA2 and enhances the association of RAD51 with chromatin, thereby promoting DNA repair by homologous recombination. Phosphorylates multiple sites within the C-terminus of TP53, which promotes activation of TP53 by acetylation and promotes cell cycle arrest and suppression of cellular proliferation. Also promotes repair of DNA cross-links through phosphorylation of FANCE. Binds to and phosphorylates TLK1 at 'Ser-743', which prevents the TLK1-dependent phosphorylation of the chromatin assembly factor ASF1A. This may enhance chromatin assembly both in the presence or absence of DNA damage. May also play a role in replication fork maintenance through regulation of PCNA. May regulate the transcription of genes that regulate cell-cycle progression through the phosphorylation of histones. Phosphorylates histone H3.1 (to form H3T11ph), which leads to epigenetic inhibition of a subset of genes. May also phosphorylate RB1 to promote its interaction with the E2F family of transcription factors and subsequent cell cycle arrest. Phosphorylates SPRTN, promoting SPRTN recruitment to chromatin. Reduces replication stress and activates the G2/M checkpoint, by phosphorylating and inactivating PABIR1/FAM122A and promoting the serine/threonine-protein phosphatase 2A-mediated dephosphorylation and stabilization of WEE1 levels and activity. This is Serine/threonine-protein kinase Chk1 (Chek1) from Mus musculus (Mouse).